Here is a 1051-residue protein sequence, read N- to C-terminus: Anucleate primary sterigmata protein B (1051 aa).

Coiled coils occupy residues 10–200 and 239–285; these read IDRL…YAIA and STLV…ELKL. The span at 58–90 shows a compositional bias: basic and acidic residues; that stretch reads KDNQGLKRKIRDLEKQLKDQQSDKESMLNHDPE. 2 disordered regions span residues 58–100 and 141–160; these read KDNQ…DRDH and LKSLNDGRPTGSDSGAREER. Residues 294 to 303 are compositionally biased toward basic and acidic residues; it reads AGDSILDRSA. Disordered stretches follow at residues 294–329, 877–902, 909–928, and 984–1051; these read AGDSILDRSASRAQGRPSSSISDRTGQSPIDDAERE, NHPRSRSTTAGVAGSPQSSTIDLAER, NTAAESPARSSIPQPAQMTN, and EERD…DIEV. Polar residues predominate over residues 309–321; the sequence is RPSSSISDRTGQS. 2 coiled-coil regions span residues 325-743 and 787-878; these read DAER…RNSM and RNLL…LQNH. Composition is skewed to polar residues over residues 877-897 and 916-928; these read NHPRSRSTTAGVAGSPQSSTI and ARSSIPQPAQMTN. The stretch at 950 to 1004 forms a coiled coil; that stretch reads NQEVWIKRLHELERRLKAEREARLLDRNGARRRLEERDAENKRLRAQLDRQRLRQ. Basic and acidic residues-rich tracts occupy residues 984–1001 and 1028–1040; these read EERDAENKRLRAQLDRQR and EGYREREEEHSSS.

It is found in the cytoplasm. Involved in regulation of nuclear migration. May be involved in regulating nuclear positioning. This chain is Anucleate primary sterigmata protein B (apsB), found in Emericella nidulans (strain FGSC A4 / ATCC 38163 / CBS 112.46 / NRRL 194 / M139) (Aspergillus nidulans).